The following is a 1003-amino-acid chain: Translation initiation factor IF-2 (1003 aa).

5 stretches are compositionally biased toward basic and acidic residues: residues 61–74 (EKFSQERQNKDRNK), 139–169 (PVVEKVVERKETPQPEKETPKPVVVEEKKPE), 180–206 (LEEKKEPKIEKTEEKTPQVKEMEKETP), 219–229 (VFKIRPTEFKS), and 252–290 (SKEEKRKEREEKDKQRQEQRKLMKDAIIKEIRKGDDKIS). Disordered stretches follow at residues 61–81 (EKFSQERQNKDRNKASISIEG) and 135–362 (PKAE…KDRF). Positions 315-350 (NAAGTTNAGGASNNNQRNDNANRPNRNNNSKPNGNN) are enriched in low complexity. A tr-type G domain is found at 502–672 (PRAPIVTVMG…LLEAEMLDLK (171 aa)). The interval 511-518 (GHVDHGKT) is G1. 511-518 (GHVDHGKT) is a binding site for GTP. The interval 536–540 (GITQH) is G2. Positions 558–561 (DTPG) are G3. Residues 558–562 (DTPGH) and 612–615 (NKVD) each bind GTP. The interval 612-615 (NKVD) is G4. Positions 648-650 (SAK) are G5.

It belongs to the TRAFAC class translation factor GTPase superfamily. Classic translation factor GTPase family. IF-2 subfamily.

It localises to the cytoplasm. One of the essential components for the initiation of protein synthesis. Protects formylmethionyl-tRNA from spontaneous hydrolysis and promotes its binding to the 30S ribosomal subunits. Also involved in the hydrolysis of GTP during the formation of the 70S ribosomal complex. The polypeptide is Translation initiation factor IF-2 (Phocaeicola vulgatus (strain ATCC 8482 / DSM 1447 / JCM 5826 / CCUG 4940 / NBRC 14291 / NCTC 11154) (Bacteroides vulgatus)).